The sequence spans 260 residues: Transmembrane protein 106C (260 aa).

Gly-2 carries N-myristoyl glycine lipidation. Residues 85 to 105 traverse the membrane as a helical segment; the sequence is YVLLSVLLCLLASGLVFFFLF. N-linked (GlcNAc...) asparagine glycosylation is present at Asn-171. Residues 196 to 216 traverse the membrane as a helical segment; that stretch reads SYVYFYCTLPAILVHNIVIFM.

Belongs to the TMEM106 family. Interacts with TMEM106B.

The protein resides in the endoplasmic reticulum membrane. It is found in the membrane. This is Transmembrane protein 106C (Tmem106c) from Rattus norvegicus (Rat).